We begin with the raw amino-acid sequence, 412 residues long: MGFITKAIPIVLAALSTVNGAKILEAGPHAETIPNKYIVVMKREVSDEAFSAHTTWLSQNLNRRVMRRSGSSKAMAGMQDKYSLGGIFRAYSGEFDDAMIKDISSHDDVDYIEPDFVVRTSTNGTNLTRQDNVPSWGLARVSSKKAGGTTYYYDSSAGKGVTAYVIDTGIDINHEDFRGRAKWGKNFVDDMDEDCNGHGTHVAGTVGGTKYGLAKGVSLVAVKVLDCEGSGSNSGVIKGMEWAMREASGGGNGTAKAAGKAVMNMSLGGPRSQASNQAAKAISDAGIFMAVAAGNENMDAQHSSPASEPSVCTVAASTEDDGKADFSNYGQLVDVYAPGKDITSLKPGGSTDTLSGTSMASPHVCGLGAYLIGLGKQGGPGLCDTIKEMAHDAIQRPGEGTTSKLIYNGSGK.

A signal peptide spans 1–20 (MGFITKAIPIVLAALSTVNG). A propeptide spanning residues 21 to 126 (AKILEAGPHA…VVRTSTNGTN (106 aa)) is cleaved from the precursor. Residues 36-120 (KYIVVMKREV…YIEPDFVVRT (85 aa)) form the Inhibitor I9 domain. Asparagine 123 and asparagine 126 each carry an N-linked (GlcNAc...) asparagine glycan. One can recognise a Peptidase S8 domain in the interval 135–412 (SWGLARVSSK…SKLIYNGSGK (278 aa)). Catalysis depends on charge relay system residues aspartate 167 and histidine 198. N-linked (GlcNAc...) asparagine glycans are attached at residues asparagine 252 and asparagine 264. Serine 358 functions as the Charge relay system in the catalytic mechanism. The N-linked (GlcNAc...) asparagine glycan is linked to asparagine 408.

This sequence belongs to the peptidase S8 family.

The protein localises to the secreted. In terms of biological role, secreted subtilisin-like serine protease with keratinolytic activity that contributes to pathogenicity. The chain is Subtilisin-like protease 6 (SUB6) from Trichophyton equinum (Horse ringworm fungus).